Reading from the N-terminus, the 442-residue chain is PCI domain-containing protein C1105.07c (442 aa).

The 192-residue stretch at 224-415 folds into the PCI domain; that stretch reads VTFRYYLGRC…STLVLKKDPS (192 aa).

The protein resides in the cytoplasm. The protein localises to the nucleus envelope. This is PCI domain-containing protein C1105.07c from Schizosaccharomyces pombe (strain 972 / ATCC 24843) (Fission yeast).